The sequence spans 594 residues: Cationic amino acid transporter 1 (594 aa).

Residue A2 is modified to N-acetylalanine. The Cytoplasmic portion of the chain corresponds to 2–78 (ASGGGDDGLR…EMKKTLTWWD (77 aa)). Residues 79 to 99 (LMWFGIGAVIGSGIFVLTGLE) traverse the membrane as a helical segment. The Extracellular segment spans residues 100-104 (ARNHS). N-linked (GlcNAc...) asparagine glycosylation is present at N102. The chain crosses the membrane as a helical span at residues 105–125 (GPAVVLSYVVSGVSAMLSVFC). At 126-149 (YTEFAVEIPVAGGSFAYLRVELGD) the chain is on the cytoplasmic side. A helical transmembrane segment spans residues 150 to 170 (FMAFIAAGNIILEYVVGGAAV). Residues 171-201 (ARSWTSYFATLLNHKPEDFRIIVHKLGEDYS) lie on the Extracellular side of the membrane. The helical transmembrane segment at 202-222 (HLDPIAVGVCAIICVLAVVGT) threads the bilayer. At 223 to 227 (KGSSR) the chain is on the cytoplasmic side. Residues 228-248 (FNYIASIIHMVVILFVIIAGF) traverse the membrane as a helical segment. The Extracellular portion of the chain corresponds to 249 to 266 (TKADVKNYSDFTPYGVRG). N-linked (GlcNAc...) asparagine glycosylation is present at N255. The helical transmembrane segment at 267–287 (VFKSAAVLFFAYIGFDAVSTM) threads the bilayer. At 288 to 297 (AEETKNPGRD) the chain is on the cytoplasmic side. Residues 298-318 (IPIGLVGSMVVTTVCYCLMAV) form a helical membrane-spanning segment. Over 319–348 (TLCLMQPYQQIDPDAPFSVAFSAVGWDWAK) the chain is Extracellular. Residues 349-369 (YIVAFGALKGMTTVLLVGAIG) traverse the membrane as a helical segment. Residues 370 to 393 (QARYMTHIARAHMMPPWLAQVNAK) lie on the Cytoplasmic side of the membrane. The chain crosses the membrane as a helical span at residues 394–414 (TGTPINATVVMLAATALIAFF). Topologically, residues 415–418 (TKLK) are extracellular. Residues 419-439 (ILADLLSVSTLFIFMFVAVAL) form a helical membrane-spanning segment. Residues 440–457 (LVRRYYVTGETSTRDRNK) are Cytoplasmic-facing. The chain crosses the membrane as a helical span at residues 458-478 (FLVFLGLILASSTATAVYWAL). The Extracellular portion of the chain corresponds to 479–483 (EEEGW). The chain crosses the membrane as a helical span at residues 484–504 (IGYCITVPIWFLSTVAMKFLV). Residues 505–511 (PQARAPK) are Cytoplasmic-facing. The helical transmembrane segment at 512–532 (IWGVPLVPWLPSASIAINIFL) threads the bilayer. At 533–543 (LGSIDTKSFVR) the chain is on the extracellular side. A helical transmembrane segment spans residues 544–564 (FAIWTGILLIYYVLFGLHATY). Residues 565-594 (DTAKATLKEKQALQKAEEGGVVADNSCSAT) lie on the Cytoplasmic side of the membrane.

The protein belongs to the amino acid-polyamine-organocation (APC) superfamily. Cationic amino acid transporter (CAT) (TC 2.A.3.3) family. Expressed in roots, stems, flowers, petioles, seeds, siliques, and leaves. Mostly present in major veins.

The protein resides in the membrane. With respect to regulation, inhibited by the protonophore 2,4-dinitrophenol. Functionally, high-affinity permease involved in the transport of the cationic amino acids (e.g. arginine, lysine, histidine, citrulline, valine, and glutamate). Transport mostly basic amino acids, and, to a lower extent neutral and acidic amino acids. May function as a proton symporter. The chain is Cationic amino acid transporter 1 (CAT1) from Arabidopsis thaliana (Mouse-ear cress).